The sequence spans 506 residues: Transcriptional coactivator YAP1 (506 aa).

Residues 1–38 (MDPGPPPPAAPPQAQGPPSAPPPPGQAPPSAPGPPAPP) are compositionally biased toward pro residues. Residues 1-60 (MDPGPPPPAAPPQAQGPPSAPPPPGQAPPSAPGPPAPPGSQAAPQAPPAGHQIVHVRGDS) are disordered. The segment covering 39–50 (GSQAAPQAPPAG) has biased composition (low complexity). At S60 the chain carries Phosphoserine. T62 is subject to Phosphothreonine. Positions 90-112 (LPDSFFKPPEPKAHSRQASTDAG) are disordered. Residues S104 and S108 each carry the phosphoserine modification. Residues T109 and T118 each carry the phosphothreonine modification. Phosphoserine is present on residues S126, S127, S130, and S137. Positions 132 to 160 (QLGAVSPGTLTPTGVSSGPAAAPSAQHLR) are disordered. Positions 147–156 (SSGPAAAPSA) are enriched in low complexity. Residue S163 is modified to Phosphoserine. WW domains lie at 170 to 204 (VPLP…PRKA) and 230 to 263 (PLPD…PRLD). S273, S288, S369, S373, S384, S390, S399, S402, and S405 each carry phosphoserine. Disordered stretches follow at residues 274–307 (QSAP…MRLQ) and 356–416 (TLEQ…RTPD). Residues 279-289 (KQPPPLAPQSP) show a composition bias toward pro residues. Positions 290–506 (PGVLGGGGSS…LDKESFLTWL (217 aa)) are transactivation domain. Positions 371–393 (GMSQELRTMTTSGSDPFLNSGTY) are enriched in polar residues. The span at 401–411 (DSGLSMSSYSV) shows a compositional bias: polar residues. Y409 is modified (phosphotyrosine). T414 carries the post-translational modification Phosphothreonine.

It belongs to the YAP1 family. As to quaternary structure, binds to the SH3 domain of the YES kinase. Binds to WBP1 and WBP2. Binds, in vitro, through the WW1 domain, to neural isoforms of ENAH that contain the PPSY motif. The phosphorylated form interacts with YWHAB. Interacts (via WW domains) with LATS1 (via PPxY motif 2). Interacts with LATS2. Interacts with TEAD1, TEAD2 and TEAD3. Interacts wih TEAD4. Interacts with TP73. Interacts with RUNX1. Interacts with HCK. Interacts (via WW domains) with PTPN14 (via PPxY motif 2); this interaction leads to the cytoplasmic sequestration of YAP1 and inhibits its transcriptional coactivator activity. Interacts (when phosphorylated at Ser-112) with SMAD2, SMAD3 and WWTR1. Interacts with PRRG2 (via cytoplasmic domain). Interacts (via WW domains) with PRRG4 (via cytoplasmic domain). Interacts (phosphorylated) with CLDN18; the interaction sequesters YAP1 away from the nucleus and thereby restricts transcription of YAP1 target genes. Interacts with SMAD1. Interacts with AMOT; the interaction facilitates translocation of YAP1 to the cytoplasm and tight junctions. Interacts with AMOTL2, the interaction is required for ubiquitination of AMOTL2 and localization of YAP1 to tight junctions. Post-translationally, phosphorylated by LATS1 and LATS2; leading to cytoplasmic translocation and inactivation. Phosphorylated by ABL1; leading to YAP1 stabilization, enhanced interaction with TP73 and recruitment onto proapoptotic genes; in response to DNA damage. Phosphorylation at Ser-402 and Ser-405 by CK1 is triggered by previous phosphorylation at Ser-399 by LATS proteins and leads to YAP1 ubiquitination by SCF(beta-TRCP) E3 ubiquitin ligase and subsequent degradation. Phosphorylated at Thr-118, Ser-137, Ser-369 and Thr-414 by MAPK8/JNK1 and MAPK9/JNK2, which is required for the regulation of apoptosis by YAP1. Phosphorylated in the nucleus by PRP4K; phosphorylation leads to nuclear exclusion. In terms of processing, ubiquitinated by SCF(beta-TRCP) E3 ubiquitin ligase.

It is found in the cytoplasm. Its subcellular location is the nucleus. It localises to the cell junction. The protein localises to the tight junction. Functionally, transcriptional regulator with dual roles as a coactivator and corepressor. Critical downstream regulatory target in the Hippo signaling pathway, crucial for organ size control and tumor suppression by restricting proliferation and promoting apoptosis. The Hippo signaling pathway core involves a kinase cascade featuring STK3/MST2 and STK4/MST1, along with its regulatory partner SAV1, which phosphorylates and activates LATS1/2 in complex with their regulatory protein, MOB1. This activation leads to the phosphorylation and inactivation of the YAP1 oncoprotein and WWTR1/TAZ. Phosphorylation of YAP1 by LATS1/2 prevents its nuclear translocation, thereby regulating the expression of its target genes. The transcriptional regulation of gene expression requires TEAD transcription factors and modulates cell growth, anchorage-independent growth, and induction of epithelial-mesenchymal transition (EMT). Plays a key role in tissue tension and 3D tissue shape by regulating the cortical actomyosin network, acting via ARHGAP18, a Rho GTPase activating protein that suppresses F-actin polymerization. It also suppresses ciliogenesis by acting as a transcriptional corepressor of TEAD4 target genes AURKA and PLK1. In conjunction with WWTR1, regulates TGFB1-dependent SMAD2 and SMAD3 nuclear accumulation. Synergizes with WBP2 to enhance PGR activity. This is Transcriptional coactivator YAP1 (YAP1) from Canis lupus familiaris (Dog).